We begin with the raw amino-acid sequence, 948 residues long: Isoleucine--tRNA ligase (948 aa).

The short motif at 58–68 is the 'HIGH' region element; that stretch reads PYANGDIHIGH. Glutamate 566 is an L-isoleucyl-5'-AMP binding site. Positions 607-611 match the 'KMSKS' region motif; it reads KMSKS. Lysine 610 contributes to the ATP binding site. Residues cysteine 911, cysteine 914, cysteine 931, and cysteine 934 each contribute to the Zn(2+) site.

This sequence belongs to the class-I aminoacyl-tRNA synthetase family. IleS type 1 subfamily. In terms of assembly, monomer. The cofactor is Zn(2+).

It localises to the cytoplasm. It carries out the reaction tRNA(Ile) + L-isoleucine + ATP = L-isoleucyl-tRNA(Ile) + AMP + diphosphate. Catalyzes the attachment of isoleucine to tRNA(Ile). As IleRS can inadvertently accommodate and process structurally similar amino acids such as valine, to avoid such errors it has two additional distinct tRNA(Ile)-dependent editing activities. One activity is designated as 'pretransfer' editing and involves the hydrolysis of activated Val-AMP. The other activity is designated 'posttransfer' editing and involves deacylation of mischarged Val-tRNA(Ile). The sequence is that of Isoleucine--tRNA ligase from Vibrio vulnificus (strain CMCP6).